Here is a 652-residue protein sequence, read N- to C-terminus: MKERMSELVELLNRYAHEYYTADRPSVSDSEYDRLYRELAELEEKYPTDILPDSPTHRVGGKILEGFEKYPHQYPLFSLQDAFSREELLAFDQRVRKEFPQVSYLCELKIDGLSISLTYENGILVAGATRGDGSVGENITENLKRVKDIPLTLKEPLDITVRGECYMPKASFDAVNQLRQENGEPEFANPRNAAAGTLRQLDTAVVAKRNLATFLYQEASPTQVGSQEEVLNKLADLDFSVNPTHILADSIESVWEFIEKIAEERDSLPYEIDGIVIKVNDLAVQEELGFTVKAPKWAIAYKFPAEEKEAQLLSVDWTVGRTGVVTPTANLTPVQLAGTTVSRATLHNVDYIAEKDIRQKDTVIVYKAGDIIPAVLRVVESKRVSEEALEVPSHCPSCESELVHFEDEVALRCINPLCPAQIKEGLIHFASRDAMNITGLGPAVVEKLFAQNLVKDVAGIYRLTIENLLELENFKEKSANKLYTAIQASKKNSAERLLFGLGIRHVGSKASRILLEKFHDIPRLSQASQEEIAAIDSLGTVIAQSLHTYFEQEGSQILLAELQEAGVNLDYLGQKAAADAALSGMTVVLTGKLQKLTRNQAKEKLQSLGANVSGSVSKKTDLVVAGADAGSKLAKAQELGIEIRDEDWLDSL.

NAD(+)-binding positions include Asp-29–Asp-33, Ser-78–Leu-79, and Glu-107. Catalysis depends on Lys-109, which acts as the N6-AMP-lysine intermediate. 4 residues coordinate NAD(+): Arg-130, Glu-164, Lys-278, and Lys-302. The Zn(2+) site is built by Cys-395, Cys-398, Cys-413, and Cys-418. The 76-residue stretch at Ala-577–Leu-652 folds into the BRCT domain.

This sequence belongs to the NAD-dependent DNA ligase family. LigA subfamily. The cofactor is Mg(2+). Mn(2+) serves as cofactor.

It carries out the reaction NAD(+) + (deoxyribonucleotide)n-3'-hydroxyl + 5'-phospho-(deoxyribonucleotide)m = (deoxyribonucleotide)n+m + AMP + beta-nicotinamide D-nucleotide.. In terms of biological role, DNA ligase that catalyzes the formation of phosphodiester linkages between 5'-phosphoryl and 3'-hydroxyl groups in double-stranded DNA using NAD as a coenzyme and as the energy source for the reaction. It is essential for DNA replication and repair of damaged DNA. The sequence is that of DNA ligase from Streptococcus sanguinis (strain SK36).